We begin with the raw amino-acid sequence, 323 residues long: MVTDKTNASSSSLVDTPADETEVQPPINRRPTFLDRLMRRQTSPSSMEYSESDKKKDGPMENEQSKGVRESSLPPLSQLSLKGYKSSTKRRLLDDELASNIRNLLPARLQLFDEWDLVYSLEQHGVSLNTLYQRSNPDYQLSQLRKNKPEVGYGDSVISSMMSGNVNSMRERRRPQGYVLIIKDENNSKFGCFVNEHLRPMDQKRYYGNGECFLWKSELFTPSPSNSNSEEDISSHLATPQIRFKAFMYTGINDNIIYSNHDFIAIGSSKGQNGLWIDRSLYNGVSYSCDTFGNEILNSNSGDAKIGKFKIMGLELWRVGTLE.

Composition is skewed to polar residues over residues 1 to 14 and 40 to 49; these read MVTD…SSLV and RQTSPSSMEY. Residues 1–81 form a disordered region; it reads MVTDKTNASS…SLPPLSQLSL (81 aa). Residues 51–69 are compositionally biased toward basic and acidic residues; the sequence is ESDKKKDGPMENEQSKGVR. Over residues 71–81 the composition is skewed to low complexity; sequence SSLPPLSQLSL. Residues 91–320 enclose the TLDc domain; it reads RLLDDELASN…IMGLELWRVG (230 aa).

Belongs to the OXR1 family.

It is found in the mitochondrion. Its function is as follows. May be involved in protection from oxidative damage. This chain is Oxidation resistance protein 1 (OXR1), found in Debaryomyces hansenii (strain ATCC 36239 / CBS 767 / BCRC 21394 / JCM 1990 / NBRC 0083 / IGC 2968) (Yeast).